A 977-amino-acid chain; its full sequence is Probable UDP-N-acetylglucosamine--peptide N-acetylglucosaminyltransferase SEC (977 aa).

TPR repeat units lie at residues I2–S35, D53–R86, T87–F120, A121–F154, A155–L188, V189–F222, A223–F256, P257–S290, A291–F324, L325–H358, P359–L392, S393–A426, A427–M460, and A461–F494. Residues P495–R977 form a catalytic region region.

The protein belongs to the glycosyltransferase 41 family. O-GlcNAc transferase subfamily. In terms of assembly, interacts with TCP14 and TCP15. Interacts with ATX1.

The catalysed reaction is L-seryl-[protein] + UDP-N-acetyl-alpha-D-glucosamine = 3-O-(N-acetyl-beta-D-glucosaminyl)-L-seryl-[protein] + UDP + H(+). It carries out the reaction L-threonyl-[protein] + UDP-N-acetyl-alpha-D-glucosamine = 3-O-(N-acetyl-beta-D-glucosaminyl)-L-threonyl-[protein] + UDP + H(+). The protein operates within protein modification; protein glycosylation. Functionally, O-linked N-acetylglucosamine transferase (OGT) that mediates O-glycosylation of capsid protein (CP) of virus in case of infection by Plum pox virus. OGTs catalyze the addition of nucleotide-activated sugars directly onto the polypeptide through O-glycosidic linkage with the hydroxyl of serine or threonine. Probably acts by adding O-linked sugars to yet unknown proteins. Its OGT activity has been proved in vitro but not in vivo. Required with SPY for gamete and seed development. Mediates O-glycosylation of the DELLA protein RGA, a repressor of the gibberellin (GA) signaling pathway. O-glycosylation by SEC inhibits RGA binding to four of its interactors PIF3, PIF4, JAZ1, and BZR1 that are key regulators in light, jasmonate, and brassinosteroid signaling pathways, respectively. Activates ATX1 through O-GlcNAc modification to augment ATX1-mediated H3K4me3 histone epigenetic modification at FLC locus, thus preventing premature flowering. The polypeptide is Probable UDP-N-acetylglucosamine--peptide N-acetylglucosaminyltransferase SEC (Arabidopsis thaliana (Mouse-ear cress)).